The sequence spans 883 residues: Valine--tRNA ligase (883 aa).

Residues Pro51–His61 carry the 'HIGH' region motif. A 'KMSKS' region motif is present at residues Lys527–Ser531. Lys530 lines the ATP pocket. The stretch at Leu811–Phe847 forms a coiled coil.

It belongs to the class-I aminoacyl-tRNA synthetase family. ValS type 1 subfamily. As to quaternary structure, monomer.

Its subcellular location is the cytoplasm. The enzyme catalyses tRNA(Val) + L-valine + ATP = L-valyl-tRNA(Val) + AMP + diphosphate. Its function is as follows. Catalyzes the attachment of valine to tRNA(Val). As ValRS can inadvertently accommodate and process structurally similar amino acids such as threonine, to avoid such errors, it has a 'posttransfer' editing activity that hydrolyzes mischarged Thr-tRNA(Val) in a tRNA-dependent manner. The polypeptide is Valine--tRNA ligase (Listeria monocytogenes serovar 1/2a (strain ATCC BAA-679 / EGD-e)).